A 423-amino-acid chain; its full sequence is Serine--tRNA ligase (423 aa).

230–232 (TAE) contacts L-serine. 261 to 263 (RQE) contacts ATP. Glu284 provides a ligand contact to L-serine. Residue 348 to 351 (EISS) participates in ATP binding. Ser384 serves as a coordination point for L-serine.

Belongs to the class-II aminoacyl-tRNA synthetase family. Type-1 seryl-tRNA synthetase subfamily. Homodimer. The tRNA molecule binds across the dimer.

It localises to the cytoplasm. The catalysed reaction is tRNA(Ser) + L-serine + ATP = L-seryl-tRNA(Ser) + AMP + diphosphate + H(+). It carries out the reaction tRNA(Sec) + L-serine + ATP = L-seryl-tRNA(Sec) + AMP + diphosphate + H(+). It functions in the pathway aminoacyl-tRNA biosynthesis; selenocysteinyl-tRNA(Sec) biosynthesis; L-seryl-tRNA(Sec) from L-serine and tRNA(Sec): step 1/1. In terms of biological role, catalyzes the attachment of serine to tRNA(Ser). Is also able to aminoacylate tRNA(Sec) with serine, to form the misacylated tRNA L-seryl-tRNA(Sec), which will be further converted into selenocysteinyl-tRNA(Sec). This is Serine--tRNA ligase from Thermoanaerobacter pseudethanolicus (strain ATCC 33223 / 39E) (Clostridium thermohydrosulfuricum).